A 472-amino-acid chain; its full sequence is Ras-GEF domain-containing family member 1B (472 aa).

The N-terminal Ras-GEF domain maps to 34-164; the sequence is HDNNLLSGSL…MMQCLIRKLA (131 aa). The Ras-GEF domain occupies 204–452; that stretch reads DPYTLAQQLT…YLASYESEGP (249 aa).

In terms of assembly, interacts with CCDC124 during cytokinesis. Interacts with Ras family proteins.

It localises to the early endosome. The protein resides in the late endosome. The protein localises to the midbody. Its function is as follows. Guanine nucleotide exchange factor (GEF) with specificity for RAP2A, it doesn't seems to activate other Ras family proteins (in vitro). This Pongo abelii (Sumatran orangutan) protein is Ras-GEF domain-containing family member 1B (RASGEF1B).